A 251-amino-acid chain; its full sequence is Hydroxyacylglutathione hydrolase (251 aa).

Histidine 53, histidine 55, aspartate 57, histidine 58, histidine 110, aspartate 127, and histidine 165 together coordinate Zn(2+).

This sequence belongs to the metallo-beta-lactamase superfamily. Glyoxalase II family. In terms of assembly, monomer. Zn(2+) is required as a cofactor.

The enzyme catalyses an S-(2-hydroxyacyl)glutathione + H2O = a 2-hydroxy carboxylate + glutathione + H(+). Its pathway is secondary metabolite metabolism; methylglyoxal degradation; (R)-lactate from methylglyoxal: step 2/2. Thiolesterase that catalyzes the hydrolysis of S-D-lactoyl-glutathione to form glutathione and D-lactic acid. This chain is Hydroxyacylglutathione hydrolase, found in Shigella boydii serotype 4 (strain Sb227).